We begin with the raw amino-acid sequence, 107 residues long: Large ribosomal subunit protein P1 (107 aa).

The span at 68–82 (PATAGAPAAAGAAAP) shows a compositional bias: low complexity. A disordered region spans residues 68–107 (PATAGAPAAAGAAAPAEEKKEEKEEEKEESDEDMGFGLFD). Positions 90 to 101 (KEEEKEESDEDM) are enriched in acidic residues.

Belongs to the eukaryotic ribosomal protein P1/P2 family. In terms of assembly, P1 and P2 exist as dimers at the large ribosomal subunit.

The protein localises to the cytoplasm. Its function is as follows. Plays an important role in the elongation step of protein synthesis. This is Large ribosomal subunit protein P1 from Penicillium brevicompactum.